We begin with the raw amino-acid sequence, 189 residues long: Peptidyl-tRNA hydrolase (189 aa).

Phe-15 is a binding site for tRNA. The Proton acceptor role is filled by His-20. The tRNA site is built by Tyr-65, Asn-67, and Asn-113.

Belongs to the PTH family. In terms of assembly, monomer.

The protein localises to the cytoplasm. It carries out the reaction an N-acyl-L-alpha-aminoacyl-tRNA + H2O = an N-acyl-L-amino acid + a tRNA + H(+). Hydrolyzes ribosome-free peptidyl-tRNAs (with 1 or more amino acids incorporated), which drop off the ribosome during protein synthesis, or as a result of ribosome stalling. Its function is as follows. Catalyzes the release of premature peptidyl moieties from peptidyl-tRNA molecules trapped in stalled 50S ribosomal subunits, and thus maintains levels of free tRNAs and 50S ribosomes. This chain is Peptidyl-tRNA hydrolase, found in Phytoplasma australiense.